We begin with the raw amino-acid sequence, 363 residues long: Dihydroorotate dehydrogenase (quinone) (363 aa).

FMN is bound by residues 62 to 66 (AGYDK) and Thr-86. Lys-66 is a substrate binding site. Position 111–115 (111–115 (NRLGF)) interacts with substrate. FMN contacts are provided by Asn-139 and Asn-170. Asn-170 lines the substrate pocket. The Nucleophile role is filled by Ser-173. Residue Asn-175 participates in substrate binding. 2 residues coordinate FMN: Lys-215 and Ser-243. 244–245 (NT) is a substrate binding site. FMN-binding positions include Gly-266, Gly-295, and 316-317 (YS).

It belongs to the dihydroorotate dehydrogenase family. Type 2 subfamily. As to quaternary structure, monomer. The cofactor is FMN.

It localises to the cell membrane. It catalyses the reaction (S)-dihydroorotate + a quinone = orotate + a quinol. It participates in pyrimidine metabolism; UMP biosynthesis via de novo pathway; orotate from (S)-dihydroorotate (quinone route): step 1/1. In terms of biological role, catalyzes the conversion of dihydroorotate to orotate with quinone as electron acceptor. The sequence is that of Dihydroorotate dehydrogenase (quinone) from Agrobacterium fabrum (strain C58 / ATCC 33970) (Agrobacterium tumefaciens (strain C58)).